A 589-amino-acid chain; its full sequence is DNA ligase (589 aa).

An ATP-binding site is contributed by E250. K252 acts as the N6-AMP-lysine intermediate in catalysis. Positions 257, 272, 302, 342, 417, and 423 each coordinate ATP.

It belongs to the ATP-dependent DNA ligase family. Mg(2+) is required as a cofactor.

It carries out the reaction ATP + (deoxyribonucleotide)n-3'-hydroxyl + 5'-phospho-(deoxyribonucleotide)m = (deoxyribonucleotide)n+m + AMP + diphosphate.. Functionally, DNA ligase that seals nicks in double-stranded DNA during DNA replication, DNA recombination and DNA repair. This is DNA ligase from Cenarchaeum symbiosum (strain A).